We begin with the raw amino-acid sequence, 308 residues long: Taste receptor type 2 member 46 (308 aa).

Residue methionine 1 is a topological domain, extracellular. Residues 2 to 22 (ITFLSITFSILVGVIFVIGNF) traverse the membrane as a helical segment. Residues 23-46 (ANGFIALVNSIEWVKRQKISFADQ) lie on the Cytoplasmic side of the membrane. A helical transmembrane segment spans residues 47-67 (ILTGLAVSRVGLLWVLLLHLY). Over 68–86 (ATEFNLAFYSVEVRITAYN) the chain is Extracellular. Residues 87-107 (VWIVTNHFSNWLSTSLSMFYL) traverse the membrane as a helical segment. Residues 108–126 (LKIATFSNLIFLHLKRKVK) lie on the Cytoplasmic side of the membrane. The helical transmembrane segment at 127 to 147 (SVILVTLLGPLLFLVCHLFVM) threads the bilayer. Residues 148-178 (NMNHIVWRKEYEGNITWRIKLRSAMYLSNVT) are Extracellular-facing. N-linked (GlcNAc...) asparagine glycans are attached at residues asparagine 161 and asparagine 176. The chain crosses the membrane as a helical span at residues 179–199 (VTMLANLIPLTLTLMSFLLLI). Residues 200 to 229 (CSLCKHLKKMQVHGKGSQDPSTKVHIKALQ) lie on the Cytoplasmic side of the membrane. Residues 230–250 (TVTSFLLLCAIYFLSMILSVW) traverse the membrane as a helical segment. Over 251-258 (NFELEKKP) the chain is Extracellular. The helical transmembrane segment at 259-279 (VFMFCQAVIFSYPSTHPLILI) threads the bilayer. Residues 280–308 (WGNKKLKQIFLSVLWNVRYWVKGQKPSSP) lie on the Cytoplasmic side of the membrane.

This sequence belongs to the G-protein coupled receptor T2R family.

Its subcellular location is the membrane. It localises to the cell projection. The protein resides in the cilium membrane. In terms of biological role, receptor that may play a role in the perception of bitterness and is gustducin-linked. May play a role in sensing the chemical composition of the gastrointestinal content. The activity of this receptor may stimulate alpha gustducin, mediate PLC-beta-2 activation and lead to the gating of TRPM5. In airway epithelial cells, binding of bitter compounds increases the intracellular calcium ion concentration and stimulates ciliary beat frequency. The protein is Taste receptor type 2 member 46 (TAS2R46) of Macaca mulatta (Rhesus macaque).